The chain runs to 246 residues: Myogenic factor 5 (246 aa).

Residues 1-38 (RVRARIPGLSSPEGEFPEDFEPRELPPFGAPAPTEPAC) form a disordered region. Residues 73 to 124 (DRRKAATMRERRRLKKVNQAFETLKRCTTANPNQRLPKVEILRNAIRYIESL) enclose the bHLH domain. The disordered stretch occupies residues 210-246 (EEPGLPLRHAGSLSPGASIDSGARTPGSPPPRTYQAL). Residues 236 to 246 (GSPPPRTYQAL) are compositionally biased toward pro residues.

Efficient DNA binding requires dimerization with another bHLH protein.

The protein localises to the nucleus. Its function is as follows. Acts as a transcriptional activator that promotes transcription of muscle-specific target genes and plays a role in muscle differentiation. Induces fibroblasts to differentiate into myoblasts. Probable sequence specific DNA-binding protein. In Coturnix japonica (Japanese quail), this protein is Myogenic factor 5 (MYF5).